A 674-amino-acid polypeptide reads, in one-letter code: Amino-acid acetyltransferase, mitochondrial (674 aa).

The transit peptide at 1–50 directs the protein to the mitochondrion; that stretch reads MPLVAAMLTRSNGAWKKATSVVQASICRDQQRPNHTTITSVTSVSQRRHF. Residues 33–45 show a composition bias toward polar residues; sequence PNHTTITSVTSVS. Residues 33-74 form a disordered region; sequence PNHTTITSVTSVSQRRHFSSAENGAKPSRSHPSAAEAKQKRE. The N-acetyltransferase domain maps to 497–665; that stretch reads GTPRLKLTDT…YEDVCRGVVP (169 aa).

Belongs to the acetyltransferase family.

It is found in the mitochondrion. The catalysed reaction is L-glutamate + acetyl-CoA = N-acetyl-L-glutamate + CoA + H(+). The protein operates within amino-acid biosynthesis; L-arginine biosynthesis; N(2)-acetyl-L-ornithine from L-glutamate: step 1/4. In terms of biological role, N-acetylglutamate synthase involved in arginine biosynthesis. The polypeptide is Amino-acid acetyltransferase, mitochondrial (ARG2) (Podospora anserina (strain S / ATCC MYA-4624 / DSM 980 / FGSC 10383) (Pleurage anserina)).